Here is an 800-residue protein sequence, read N- to C-terminus: DNA topoisomerase 4 subunit A (800 aa).

Residues 31 to 495 (LPDVRDGLKP…EIEEIKIDKE (465 aa)) form the Topo IIA-type catalytic domain. Residue tyrosine 119 is the O-(5'-phospho-DNA)-tyrosine intermediate of the active site.

The protein belongs to the type II topoisomerase GyrA/ParC subunit family. ParC type 2 subfamily. In terms of assembly, heterotetramer composed of ParC and ParE.

It localises to the cell membrane. The catalysed reaction is ATP-dependent breakage, passage and rejoining of double-stranded DNA.. Topoisomerase IV is essential for chromosome segregation. It relaxes supercoiled DNA. Performs the decatenation events required during the replication of a circular DNA molecule. The sequence is that of DNA topoisomerase 4 subunit A from Staphylococcus aureus (strain MSSA476).